The primary structure comprises 440 residues: Probable carboxypeptidase AFUB_072730 (440 aa).

An N-terminal signal peptide occupies residues methionine 1 to alanine 16. N-linked (GlcNAc...) asparagine glycans are attached at residues asparagine 87 and asparagine 149. Aspartate 165 is a Zn(2+) binding site. Glutamate 197 acts as the Proton acceptor in catalysis. Glutamate 198 is a binding site for Zn(2+). Residues asparagine 353 and asparagine 372 are each glycosylated (N-linked (GlcNAc...) asparagine).

This sequence belongs to the peptidase M20A family. Requires Zn(2+) as cofactor.

It localises to the secreted. This is Probable carboxypeptidase AFUB_072730 from Aspergillus fumigatus (strain CBS 144.89 / FGSC A1163 / CEA10) (Neosartorya fumigata).